The primary structure comprises 810 residues: AMP deaminase (810 aa).

Over residues 1 to 10 the composition is skewed to polar residues; the sequence is MDNQATQRLN. Disordered stretches follow at residues 1–61 and 114–137; these read MDNQ…SHES and AAMNKGHDSADHASQNSGGKPRTL. 3 positions are modified to phosphoserine: Ser-19, Ser-58, and Ser-61. The span at 125 to 137 shows a compositional bias: polar residues; that stretch reads HASQNSGGKPRTL. At Ser-138 the chain carries Phosphoserine. His-362 and His-364 together coordinate Zn(2+). Substrate is bound by residues His-364 and 433 to 438; that span reads KFNLKY. His-630 lines the Zn(2+) pocket. Glu-633 lines the substrate pocket. His-652 acts as the Proton acceptor in catalysis. Asp-707 lines the Zn(2+) pocket. 708–711 is a substrate binding site; it reads DPLQ.

It belongs to the metallo-dependent hydrolases superfamily. Adenosine and AMP deaminases family. In terms of assembly, homotetramer. It depends on Zn(2+) as a cofactor.

It catalyses the reaction AMP + H2O + H(+) = IMP + NH4(+). Its pathway is purine metabolism; IMP biosynthesis via salvage pathway; IMP from AMP: step 1/1. AMP deaminase plays a critical role in energy metabolism. The chain is AMP deaminase (AMD1) from Saccharomyces cerevisiae (strain ATCC 204508 / S288c) (Baker's yeast).